The following is a 265-amino-acid chain: Sulfur carrier protein FdhD (265 aa).

Cys107 (cysteine persulfide intermediate) is an active-site residue.

The protein belongs to the FdhD family.

Its subcellular location is the cytoplasm. In terms of biological role, required for formate dehydrogenase (FDH) activity. Acts as a sulfur carrier protein that transfers sulfur from IscS to the molybdenum cofactor prior to its insertion into FDH. This Staphylococcus aureus (strain JH9) protein is Sulfur carrier protein FdhD.